The sequence spans 552 residues: DNA ligase (552 aa).

Glu244 contributes to the ATP binding site. The active-site N6-AMP-lysine intermediate is Lys246. The ATP site is built by Arg251, Arg266, Glu296, Phe336, Arg408, and Lys414.

This sequence belongs to the ATP-dependent DNA ligase family. Requires Mg(2+) as cofactor.

The catalysed reaction is ATP + (deoxyribonucleotide)n-3'-hydroxyl + 5'-phospho-(deoxyribonucleotide)m = (deoxyribonucleotide)n+m + AMP + diphosphate.. In terms of biological role, DNA ligase that seals nicks in double-stranded DNA during DNA replication, DNA recombination and DNA repair. In Methanothrix thermoacetophila (strain DSM 6194 / JCM 14653 / NBRC 101360 / PT) (Methanosaeta thermophila), this protein is DNA ligase.